The sequence spans 909 residues: E3 ubiquitin-protein ligase HACE1 (909 aa).

Residues 1-21 (MERAMEQLNRLTRSLRRARTV) are N-terminal helix important for homodimerization. 7 ANK repeats span residues 23–55 (LPED…NSKF), 64–93 (VKRS…NPNY), 97–126 (SGCT…DVNI), 130–159 (EGLT…DVDV), 163–192 (MGQT…DINR), 196–226 (SGAT…YLPD), and 228–253 (NGVT…QYHP). The segment at 398-433 (QDQEAPSLSAFEPPGPGSYESLPPGPGDSKPEVLAG) is disordered. An HECT domain is found at 574–909 (NCAKLKQGIA…HCGSYGYTMA (336 aa)). Cys876 acts as the Glycyl thioester intermediate in catalysis.

Homodimer. The homodimer is autoinhibited and stabilized by its N-terminal helix. Interacts with RAB1 (RAB1A, RAB1B or RAB1C), RAB4 (RAB4A or RAB4B) and RAB11 (RAB11A or RAB11B); in a GTP-dependent manner. Interacts with the 26S proteasomal complex through the 20S core proteasomal subunit. Interacts with RARB. Autoubiquitinated.

Its subcellular location is the golgi apparatus. The protein resides in the golgi stack membrane. The protein localises to the cytoplasm. It is found in the endoplasmic reticulum. The enzyme catalyses S-ubiquitinyl-[E2 ubiquitin-conjugating enzyme]-L-cysteine + [acceptor protein]-L-lysine = [E2 ubiquitin-conjugating enzyme]-L-cysteine + N(6)-ubiquitinyl-[acceptor protein]-L-lysine.. It participates in protein modification; protein ubiquitination. Sterically autoinhibited in its dimeric state. In terms of biological role, E3 ubiquitin-protein ligase involved in Golgi membrane fusion and regulation of small GTPases. Acts as a regulator of Golgi membrane dynamics during the cell cycle: recruited to Golgi membrane by Rab proteins and regulates postmitotic Golgi membrane fusion. Acts by mediating ubiquitination during mitotic Golgi disassembly, ubiquitination serving as a signal for Golgi reassembly later, after cell division. Specifically binds GTP-bound RAC1, mediating ubiquitination and subsequent degradation of active RAC1, thereby playing a role in host defense against pathogens. May also act as a transcription regulator via its interaction with RARB. The protein is E3 ubiquitin-protein ligase HACE1 (Hace1) of Mus musculus (Mouse).